Consider the following 78-residue polypeptide: D-alanyl carrier protein (78 aa).

The Carrier domain maps to Met1–Lys78. Position 36 is an O-(pantetheine 4'-phosphoryl)serine (Ser36).

It belongs to the DltC family. In terms of processing, 4'-phosphopantetheine is transferred from CoA to a specific serine of apo-DCP.

It localises to the cytoplasm. It functions in the pathway cell wall biogenesis; lipoteichoic acid biosynthesis. In terms of biological role, carrier protein involved in the D-alanylation of lipoteichoic acid (LTA). The loading of thioester-linked D-alanine onto DltC is catalyzed by D-alanine--D-alanyl carrier protein ligase DltA. The DltC-carried D-alanyl group is further transferred to cell membrane phosphatidylglycerol (PG) by forming an ester bond, probably catalyzed by DltD. D-alanylation of LTA plays an important role in modulating the properties of the cell wall in Gram-positive bacteria, influencing the net charge of the cell wall. This chain is D-alanyl carrier protein, found in Bacillus subtilis (strain 168).